A 361-amino-acid polypeptide reads, in one-letter code: MSQIFNFSSGPAMLPVEVLRRAEQELCNWRGLGTSVMEISHRSKEFIQVAEEAEKDFRDLLKIPSNYKVLFCHGGARGQFAAVPLNLLGQHGKADYVDGGYWAASAIKEAQKYCTPNVIDAKTTLNGLRAISPMNSWELSDDAAYVHFCPNETIDGIAIHETPDFGDKTVVADLSSTILSTPIDVSRYGVLYAGAQKNIGPAGLTLVVVREDLLGHARKELPSILDYTVLAENDSMFNTPPTFAWYLSGLVFKWLKEQGGVGELDKRNQAKADLLYGTIDSSDFYRNDVAVANRSRMNVPFQLADAALDKLFLEESFAAGLHALKGHRVVGGMRASIYNAMPLAGVKTLTDFMIDFERRHG.

Positions 9 and 42 each coordinate L-glutamate. Residues Ala-76 to Arg-77, Trp-102, Thr-153, Asp-173, and Gln-196 each bind pyridoxal 5'-phosphate. Lys-197 is modified (N6-(pyridoxal phosphate)lysine). Residue Asn-238–Thr-239 participates in pyridoxal 5'-phosphate binding.

This sequence belongs to the class-V pyridoxal-phosphate-dependent aminotransferase family. SerC subfamily. In terms of assembly, homodimer. It depends on pyridoxal 5'-phosphate as a cofactor.

The protein resides in the cytoplasm. It carries out the reaction O-phospho-L-serine + 2-oxoglutarate = 3-phosphooxypyruvate + L-glutamate. The catalysed reaction is 4-(phosphooxy)-L-threonine + 2-oxoglutarate = (R)-3-hydroxy-2-oxo-4-phosphooxybutanoate + L-glutamate. Its pathway is amino-acid biosynthesis; L-serine biosynthesis; L-serine from 3-phospho-D-glycerate: step 2/3. The protein operates within cofactor biosynthesis; pyridoxine 5'-phosphate biosynthesis; pyridoxine 5'-phosphate from D-erythrose 4-phosphate: step 3/5. In terms of biological role, catalyzes the reversible conversion of 3-phosphohydroxypyruvate to phosphoserine and of 3-hydroxy-2-oxo-4-phosphonooxybutanoate to phosphohydroxythreonine. The sequence is that of Phosphoserine aminotransferase from Erwinia tasmaniensis (strain DSM 17950 / CFBP 7177 / CIP 109463 / NCPPB 4357 / Et1/99).